Here is an 808-residue protein sequence, read N- to C-terminus: Homeobox-leucine zipper protein HDG1 (808 aa).

The disordered stretch occupies residues 57–121; it reads LQTNGEMSRN…KRYHRHTPKQ (65 aa). Residues 79–90 show a composition bias toward basic and acidic residues; that stretch reads SRGEDVESRSES. Residues 108-119 show a composition bias toward basic residues; the sequence is LKKKKRYHRHTP. The segment at residues 110-169 is a DNA-binding region (homeobox); the sequence is KKKRYHRHTPKQIQDLESVFKECAHPDEKQRLDLSRRLNLDPRQVKFWFQNRRTQMKTQI. The stretch at 158-233 forms a coiled coil; that stretch reads FQNRRTQMKT…SRLKDELDRV (76 aa). In terms of domain architecture, START spans 310–541; that stretch reads DFDQRSRYLD…LQRQCECLTI (232 aa).

It belongs to the HD-ZIP homeobox family. Class IV subfamily. Interacts with CFL1. Binds with BBM. Expressed in trichomes forming at the base of young leaves, in endodermal cell lines around emergent lateral roots and in the epidermal layer of the stamen filament.

It is found in the nucleus. Functionally, probable transcription factor. Promotes cuticle development probably by modulating the expression of the downstream genes BDG and FDH, possibly repressed in a CFL1-dependent manner. Involved, together with PDF2, in the regulation of flower organs development by promoting the expression of APETALA 3 (AP3) in the epidermis and internal cell layers of developing flowers. In opposition to BBM, seems to promote cell differentiation and giant cell identity via transcriptional repression of meristem and cell proliferation genes. In Arabidopsis thaliana (Mouse-ear cress), this protein is Homeobox-leucine zipper protein HDG1.